The sequence spans 738 residues: Cleavage and polyadenylation specificity factor subunit 2 (738 aa).

This sequence belongs to the metallo-beta-lactamase superfamily. RNA-metabolizing metallo-beta-lactamase-like family. CPSF2/YSH1 subfamily. In terms of assembly, CPSF is a heterotetramer composed of four distinct subunits 160, 100, 70 and 30 kDa.

It is found in the nucleus. Its function is as follows. CPSF plays a key role in pre-mRNA 3'-end formation, recognizing the AAUAAA signal sequence and interacting with poly(A)polymerase and other factors to bring about cleavage and poly(A) addition. The chain is Cleavage and polyadenylation specificity factor subunit 2 from Oryza sativa subsp. japonica (Rice).